A 115-amino-acid polypeptide reads, in one-letter code: Large ribosomal subunit protein bL19 (115 aa).

Belongs to the bacterial ribosomal protein bL19 family.

In terms of biological role, this protein is located at the 30S-50S ribosomal subunit interface and may play a role in the structure and function of the aminoacyl-tRNA binding site. This is Large ribosomal subunit protein bL19 from Streptococcus thermophilus (strain CNRZ 1066).